The sequence spans 127 residues: Large ribosomal subunit protein bL20 (127 aa).

The protein belongs to the bacterial ribosomal protein bL20 family.

In terms of biological role, binds directly to 23S ribosomal RNA and is necessary for the in vitro assembly process of the 50S ribosomal subunit. It is not involved in the protein synthesizing functions of that subunit. The polypeptide is Large ribosomal subunit protein bL20 (rplT) (Streptomyces coelicolor (strain ATCC BAA-471 / A3(2) / M145)).